The chain runs to 317 residues: L-lactate dehydrogenase (317 aa).

NAD(+) is bound by residues V17, D38, K43, Y69, and 83–84 (GA). The substrate site is built by Q86 and R92. Residues S105, 122-124 (ATN), and S147 contribute to the NAD(+) site. Position 124 to 127 (124 to 127 (NPVD)) interacts with substrate. Position 152-155 (152-155 (DTAR)) interacts with substrate. Beta-D-fructose 1,6-bisphosphate-binding residues include R157 and H172. The active-site Proton acceptor is the H179. Residue Y224 is modified to Phosphotyrosine. T233 lines the substrate pocket.

It belongs to the LDH/MDH superfamily. LDH family. Homotetramer.

The protein localises to the cytoplasm. It carries out the reaction (S)-lactate + NAD(+) = pyruvate + NADH + H(+). It functions in the pathway fermentation; pyruvate fermentation to lactate; (S)-lactate from pyruvate: step 1/1. With respect to regulation, allosterically activated by fructose 1,6-bisphosphate (FBP). Its function is as follows. Catalyzes the conversion of lactate to pyruvate. The chain is L-lactate dehydrogenase from Geobacillus thermodenitrificans (strain NG80-2).